A 153-amino-acid chain; its full sequence is Endoribonuclease YbeY (153 aa).

The Zn(2+) site is built by His118, His122, and His128.

This sequence belongs to the endoribonuclease YbeY family. The cofactor is Zn(2+).

It is found in the cytoplasm. Single strand-specific metallo-endoribonuclease involved in late-stage 70S ribosome quality control and in maturation of the 3' terminus of the 16S rRNA. This chain is Endoribonuclease YbeY, found in Staphylococcus saprophyticus subsp. saprophyticus (strain ATCC 15305 / DSM 20229 / NCIMB 8711 / NCTC 7292 / S-41).